The chain runs to 270 residues: Sulfur carrier protein FdhD (270 aa).

C116 (cysteine persulfide intermediate) is an active-site residue. Position 253–258 (253–258) interacts with Mo-bis(molybdopterin guanine dinucleotide); sequence FAREGK.

It belongs to the FdhD family.

Its subcellular location is the cytoplasm. In terms of biological role, required for formate dehydrogenase (FDH) activity. Acts as a sulfur carrier protein that transfers sulfur from IscS to the molybdenum cofactor prior to its insertion into FDH. The protein is Sulfur carrier protein FdhD of Haemophilus influenzae (strain 86-028NP).